The sequence spans 271 residues: Phycocyanobilin lyase subunit alpha (271 aa).

It belongs to the CpcE/RpcE/PecE family. As to quaternary structure, cpcE and CpcF associate to form a lyase.

In terms of biological role, required for the chromophorylation of the cpcA1 gene product. The chain is Phycocyanobilin lyase subunit alpha (cpcE1) from Pseudanabaena tenuis (strain PCC 7409).